The following is a 410-amino-acid chain: Aspartic proteinase Asp1 (410 aa).

An N-terminal signal peptide occupies residues 1–23 (MTARLALLASLLLLLQLVPPSSA). The propeptide at 24 to 46 (VVLELHGNVYPIGHFFITMNIGD) is removed in mature form. The Peptidase A1 domain maps to 38-392 (FFITMNIGDP…DSERSLLGWV (355 aa)). Catalysis depends on residues Asp56 and Asp257.

This sequence belongs to the peptidase A1 family.

This chain is Aspartic proteinase Asp1 (ASP1), found in Oryza sativa subsp. japonica (Rice).